We begin with the raw amino-acid sequence, 353 residues long: RNA 3'-terminal phosphate cyclase (353 aa).

ATP contacts are provided by residues Gln-103 and 297-301 (HLADQ). His-322 (tele-AMP-histidine intermediate) is an active-site residue.

It belongs to the RNA 3'-terminal cyclase family. Type 1 subfamily.

It localises to the cytoplasm. It carries out the reaction a 3'-end 3'-phospho-ribonucleotide-RNA + ATP = a 3'-end 2',3'-cyclophospho-ribonucleotide-RNA + AMP + diphosphate. Its function is as follows. Catalyzes the conversion of 3'-phosphate to a 2',3'-cyclic phosphodiester at the end of RNA. The mechanism of action of the enzyme occurs in 3 steps: (A) adenylation of the enzyme by ATP; (B) transfer of adenylate to an RNA-N3'P to produce RNA-N3'PP5'A; (C) and attack of the adjacent 2'-hydroxyl on the 3'-phosphorus in the diester linkage to produce the cyclic end product. The biological role of this enzyme is unknown but it is likely to function in some aspects of cellular RNA processing. The polypeptide is RNA 3'-terminal phosphate cyclase (Salmonella heidelberg (strain SL476)).